Reading from the N-terminus, the 143-residue chain is Large ribosomal subunit protein uL13 (143 aa).

Belongs to the universal ribosomal protein uL13 family. Part of the 50S ribosomal subunit.

This protein is one of the early assembly proteins of the 50S ribosomal subunit, although it is not seen to bind rRNA by itself. It is important during the early stages of 50S assembly. The chain is Large ribosomal subunit protein uL13 from Desulfitobacterium hafniense (strain DSM 10664 / DCB-2).